Reading from the N-terminus, the 159-residue chain is MGDNAEQAVQTDIDIAEILARIPHRYPFLLVDRAEDYNPHQSIVGIKCVTINEPFFQGHFPGNPVMPGVLIIEALAQTGAVLMSKSLEVDTEGKTIFFMSVDNARFRNPVRPGDVIRMEVEVLRARSSIFKFKGVAKVGDKVAAEAEFAAMVVETGPKA.

H59 is a catalytic residue.

It belongs to the thioester dehydratase family. FabZ subfamily.

The protein resides in the cytoplasm. It carries out the reaction a (3R)-hydroxyacyl-[ACP] = a (2E)-enoyl-[ACP] + H2O. Its function is as follows. Involved in unsaturated fatty acids biosynthesis. Catalyzes the dehydration of short chain beta-hydroxyacyl-ACPs and long chain saturated and unsaturated beta-hydroxyacyl-ACPs. In Caulobacter vibrioides (strain ATCC 19089 / CIP 103742 / CB 15) (Caulobacter crescentus), this protein is 3-hydroxyacyl-[acyl-carrier-protein] dehydratase FabZ.